A 157-amino-acid chain; its full sequence is Cytochrome c-type biogenesis protein CcmE (157 aa).

Over 1–8 the chain is Cytoplasmic; the sequence is MHPVRKQR. Residues 9 to 29 form a helical; Signal-anchor for type II membrane protein membrane-spanning segment; that stretch reads LMTVLFIVIASSVAVGLMVFA. Over 30 to 157 the chain is Periplasmic; that stretch reads LSKNLNLFYP…KTCEGLDYAS (128 aa). Heme is bound by residues His-124 and Tyr-128.

It belongs to the CcmE/CycJ family.

The protein resides in the cell inner membrane. Its function is as follows. Heme chaperone required for the biogenesis of c-type cytochromes. Transiently binds heme delivered by CcmC and transfers the heme to apo-cytochromes in a process facilitated by CcmF and CcmH. The protein is Cytochrome c-type biogenesis protein CcmE of Saccharophagus degradans (strain 2-40 / ATCC 43961 / DSM 17024).